The following is a 316-amino-acid chain: Adenine deaminase (316 aa).

3 residues coordinate Zn(2+): H14, H16, and H194. E197 acts as the Proton donor in catalysis. D275 is a Zn(2+) binding site. D276 contributes to the substrate binding site.

Belongs to the metallo-dependent hydrolases superfamily. Adenosine and AMP deaminases family. Adenine deaminase type 2 subfamily. It depends on Zn(2+) as a cofactor.

It carries out the reaction adenine + H2O + H(+) = hypoxanthine + NH4(+). Catalyzes the hydrolytic deamination of adenine to hypoxanthine. Plays an important role in the purine salvage pathway and in nitrogen catabolism. This chain is Adenine deaminase, found in Pseudomonas paraeruginosa (strain DSM 24068 / PA7) (Pseudomonas aeruginosa (strain PA7)).